An 862-amino-acid chain; its full sequence is Protein translocase subunit SecA (862 aa).

ATP-binding positions include glutamine 86, 104-108, and aspartate 499; that span reads GEGKT. Zn(2+) contacts are provided by cysteine 848, cysteine 850, cysteine 859, and histidine 860.

Belongs to the SecA family. As to quaternary structure, monomer and homodimer. Part of the essential Sec protein translocation apparatus which comprises SecA, SecYEG and auxiliary proteins SecDF-YajC and YidC. Requires Zn(2+) as cofactor.

It is found in the cell inner membrane. The protein localises to the cytoplasm. The catalysed reaction is ATP + H2O + cellular proteinSide 1 = ADP + phosphate + cellular proteinSide 2.. In terms of biological role, part of the Sec protein translocase complex. Interacts with the SecYEG preprotein conducting channel. Has a central role in coupling the hydrolysis of ATP to the transfer of proteins into and across the cell membrane, serving both as a receptor for the preprotein-SecB complex and as an ATP-driven molecular motor driving the stepwise translocation of polypeptide chains across the membrane. The chain is Protein translocase subunit SecA from Ehrlichia canis (strain Jake).